Reading from the N-terminus, the 338-residue chain is Holliday junction branch migration complex subunit RuvB (338 aa).

The large ATPase domain (RuvB-L) stretch occupies residues 1–184; that stretch reads MTEEERLLSA…FGIISHMEYY (184 aa). ATP contacts are provided by residues leucine 23, arginine 24, glycine 65, lysine 68, threonine 69, threonine 70, 131–133, arginine 174, tyrosine 184, and arginine 221; that span reads EDF. Threonine 69 provides a ligand contact to Mg(2+). Residues 185-255 form a small ATPAse domain (RuvB-S) region; that stretch reads QEQDLKEIVL…IADKALTLLQ (71 aa). The segment at 258-338 is head domain (RuvB-H); that stretch reads HQGLDYVDQK…GYDYLEGRKN (81 aa). Positions 313 and 318 each coordinate DNA.

Belongs to the RuvB family. As to quaternary structure, homohexamer. Forms an RuvA(8)-RuvB(12)-Holliday junction (HJ) complex. HJ DNA is sandwiched between 2 RuvA tetramers; dsDNA enters through RuvA and exits via RuvB. An RuvB hexamer assembles on each DNA strand where it exits the tetramer. Each RuvB hexamer is contacted by two RuvA subunits (via domain III) on 2 adjacent RuvB subunits; this complex drives branch migration. In the full resolvosome a probable DNA-RuvA(4)-RuvB(12)-RuvC(2) complex forms which resolves the HJ.

The protein resides in the cytoplasm. The catalysed reaction is ATP + H2O = ADP + phosphate + H(+). In terms of biological role, the RuvA-RuvB-RuvC complex processes Holliday junction (HJ) DNA during genetic recombination and DNA repair, while the RuvA-RuvB complex plays an important role in the rescue of blocked DNA replication forks via replication fork reversal (RFR). RuvA specifically binds to HJ cruciform DNA, conferring on it an open structure. The RuvB hexamer acts as an ATP-dependent pump, pulling dsDNA into and through the RuvAB complex. RuvB forms 2 homohexamers on either side of HJ DNA bound by 1 or 2 RuvA tetramers; 4 subunits per hexamer contact DNA at a time. Coordinated motions by a converter formed by DNA-disengaged RuvB subunits stimulates ATP hydrolysis and nucleotide exchange. Immobilization of the converter enables RuvB to convert the ATP-contained energy into a lever motion, pulling 2 nucleotides of DNA out of the RuvA tetramer per ATP hydrolyzed, thus driving DNA branch migration. The RuvB motors rotate together with the DNA substrate, which together with the progressing nucleotide cycle form the mechanistic basis for DNA recombination by continuous HJ branch migration. Branch migration allows RuvC to scan DNA until it finds its consensus sequence, where it cleaves and resolves cruciform DNA. The polypeptide is Holliday junction branch migration complex subunit RuvB (Enterococcus faecalis (strain ATCC 700802 / V583)).